A 703-amino-acid polypeptide reads, in one-letter code: Cyclomaltodextrin glucanotransferase (703 aa).

The signal sequence occupies residues 1-29; sequence MNDLNDFLKTILLSFIFFLLLSLPTVAEA. The A1 stretch occupies residues 30-160; sequence DVTNKVNYSK…GIKVIMDFTP (131 aa). Ca(2+)-binding residues include D52, N54, N57, and N58. C68 and C75 are disulfide-bonded. Ca(2+) is bound by residues G76 and D78. 122–123 contacts substrate; that stretch reads YW. N161 lines the Ca(2+) pocket. The tract at residues 161–224 is b; the sequence is NHSSPALETN…NLYDLADYDL (64 aa). Substrate is bound at residue H162. Ca(2+) is bound at residue I212. Residue 215-218 coordinates substrate; it reads NLYD. D221 contacts Ca(2+). The segment at 225-428 is A2; it reads NNTVMDQYLK…LRQTNSALGY (204 aa). R249 lines the substrate pocket. The active-site Nucleophile is D251. 254 to 255 is a substrate binding site; the sequence is KH. Residue H255 coordinates Ca(2+). E279 acts as the Proton donor in catalysis. Substrate is bound by residues H349, D393, and R397. A c region spans residues 429–516; it reads GTTTERWLNE…SVAVWQVSNP (88 aa). Positions 517 to 600 are d; that stretch reads STSPLIGQVG…SPTYKEFEVL (84 aa). The IPT/TIG domain occupies 520-598; it reads PLIGQVGPMM…IKSPTYKEFE (79 aa). The 105-residue stretch at 599 to 703 folds into the CBM20 domain; that stretch reads VLSGNQVSVR…TGTDTVMINW (105 aa). The interval 601 to 703 is e; sequence SGNQVSVRFG…TGTDTVMINW (103 aa).

The protein belongs to the glycosyl hydrolase 13 family. Monomer. Requires Ca(2+) as cofactor.

Its subcellular location is the secreted. The enzyme catalyses Cyclizes part of a (1-&gt;4)-alpha-D-glucan chain by formation of a (1-&gt;4)-alpha-D-glucosidic bond.. The polypeptide is Cyclomaltodextrin glucanotransferase (cgt) (Bacillus sp. (strain 1-1)).